Here is a 461-residue protein sequence, read N- to C-terminus: Protein YIG1 (461 aa).

The interval S58–E80 is disordered. Residues S71–E80 show a composition bias toward acidic residues.

It localises to the cytoplasm. The protein resides in the nucleus. Functionally, involved in the regulation of anaerobiotic glycerol metabolism. The protein is Protein YIG1 (YIG1) of Saccharomyces cerevisiae (strain ATCC 204508 / S288c) (Baker's yeast).